An 85-amino-acid polypeptide reads, in one-letter code: Small ribosomal subunit protein bS16 (85 aa).

Belongs to the bacterial ribosomal protein bS16 family.

This chain is Small ribosomal subunit protein bS16, found in Metamycoplasma arthritidis (strain 158L3-1) (Mycoplasma arthritidis).